The primary structure comprises 684 residues: Methionine--tRNA ligase (684 aa).

Residues 15 to 25 (PYANGAIHLGH) carry the 'HIGH' region motif. Zn(2+) is bound by residues Cys146, Cys149, Cys159, and Cys162. The short motif at 331–335 (KMSKS) is the 'KMSKS' region element. Lys334 provides a ligand contact to ATP. Residues 582–684 (DFAKLDLRVA…SGVTAGMQVR (103 aa)) enclose the tRNA-binding domain.

Belongs to the class-I aminoacyl-tRNA synthetase family. MetG type 1 subfamily. Homodimer. Zn(2+) is required as a cofactor.

The protein resides in the cytoplasm. It catalyses the reaction tRNA(Met) + L-methionine + ATP = L-methionyl-tRNA(Met) + AMP + diphosphate. In terms of biological role, is required not only for elongation of protein synthesis but also for the initiation of all mRNA translation through initiator tRNA(fMet) aminoacylation. In Glaesserella parasuis serovar 5 (strain SH0165) (Haemophilus parasuis), this protein is Methionine--tRNA ligase.